A 552-amino-acid chain; its full sequence is Urocanate hydratase (552 aa).

NAD(+)-binding positions include 49–50, Gln127, 173–175, Asp193, 239–240, 260–264, 270–271, and Tyr319; these read GG, GMG, NA, QTSAH, and YI. Cys407 is an active-site residue. Gly489 lines the NAD(+) pocket.

It belongs to the urocanase family. NAD(+) serves as cofactor.

It localises to the cytoplasm. It catalyses the reaction 4-imidazolone-5-propanoate = trans-urocanate + H2O. The protein operates within amino-acid degradation; L-histidine degradation into L-glutamate; N-formimidoyl-L-glutamate from L-histidine: step 2/3. Functionally, catalyzes the conversion of urocanate to 4-imidazolone-5-propionate. This Bacillus cereus (strain G9842) protein is Urocanate hydratase.